The following is a 153-amino-acid chain: Acylphosphatase-like protein MJ0553 (153 aa).

The region spanning 4–102 (TYELIIYGRV…SRLSSDDILE (99 aa)) is the Acylphosphatase-like domain.

This chain is Acylphosphatase-like protein MJ0553, found in Methanocaldococcus jannaschii (strain ATCC 43067 / DSM 2661 / JAL-1 / JCM 10045 / NBRC 100440) (Methanococcus jannaschii).